A 1674-amino-acid polypeptide reads, in one-letter code: Maestro heat-like repeat-containing protein family member 2A (1674 aa).

Residues 1–26 (MTEAITEAAVASSEEVSEERDDLGPL) are disordered. 14 HEAT repeats span residues 73 to 96 (ATTE…ISTQ), 97 to 133 (RKVN…EMRE), 195 to 234 (MPYM…TVQF), 254 to 292 (LKVF…LLLP), 382 to 419 (SYPK…ADEP), 424 to 461 (RAIY…CGYQ), 573 to 612 (PAPQ…SIAP), 615 to 641 (ADMW…DQKA), 642 to 679 (WEDK…SFDS), 739 to 776 (KTVL…ETVK), 993 to 1030 (GQFG…LHAS), 1221 to 1263 (DPLM…SHRP), 1381 to 1420 (EKLL…GAPK), and 1627 to 1674 (LDFP…QGMS).

This chain is Maestro heat-like repeat-containing protein family member 2A (MROH2A), found in Homo sapiens (Human).